The chain runs to 396 residues: MTLLNPYFGEFGGQFVPQILMPALRQLEEAFVNAQKDPEFQAEFTDLLKNYAGRPTALTLCQNLTAGTKTKLYLKREDLLHGGAHKTNQVLGQALLAKRMGKSEIIAETGAGQHGVATALACALLGLKCRVYMGAKDVERQSPNVFRMRLMGAEVIPVHSGSSTLKDACNEALRDWSGSYETAHYLLGTAAGPHPYPTIVREFQRMIGEETKAQILEKEGRLPDAVLACVGGGSNAIGMFADFIDDTSVRLIGIEPGGLGIESGQHGAPLKHGRLGIYFGMKSPMMQTSDGQIEESYSISAGLDFPSVGPQHAYLNSIGRADYVSITDDEALDAFKTLCRSEGIIPALESSHALAHALKMIKAEPEKEQLLVVNLSGRGDKDIFTVHDILKDRGEI.

K86 carries the post-translational modification N6-(pyridoxal phosphate)lysine.

This sequence belongs to the TrpB family. As to quaternary structure, tetramer of two alpha and two beta chains. Pyridoxal 5'-phosphate is required as a cofactor.

The catalysed reaction is (1S,2R)-1-C-(indol-3-yl)glycerol 3-phosphate + L-serine = D-glyceraldehyde 3-phosphate + L-tryptophan + H2O. It functions in the pathway amino-acid biosynthesis; L-tryptophan biosynthesis; L-tryptophan from chorismate: step 5/5. The beta subunit is responsible for the synthesis of L-tryptophan from indole and L-serine. The sequence is that of Tryptophan synthase beta chain from Pectobacterium carotovorum subsp. carotovorum (strain PC1).